The primary structure comprises 360 residues: NAD(P)H-quinone oxidoreductase subunit 1, chloroplastic (360 aa).

8 helical membrane passes run 29 to 49 (WIPL…LVIV), 96 to 116 (IWLF…AYLV), 128 to 148 (ISLG…GLLM), 166 to 186 (AAQA…ICLL), 204 to 224 (ILGW…IAAL), 255 to 277 (GLFY…ILYL), 297 to 317 (IFAA…FIFL), and 333 to 353 (LLDL…LLTA).

Belongs to the complex I subunit 1 family. As to quaternary structure, NDH is composed of at least 16 different subunits, 5 of which are encoded in the nucleus.

Its subcellular location is the plastid. The protein resides in the chloroplast thylakoid membrane. It carries out the reaction a plastoquinone + NADH + (n+1) H(+)(in) = a plastoquinol + NAD(+) + n H(+)(out). The catalysed reaction is a plastoquinone + NADPH + (n+1) H(+)(in) = a plastoquinol + NADP(+) + n H(+)(out). In terms of biological role, NDH shuttles electrons from NAD(P)H:plastoquinone, via FMN and iron-sulfur (Fe-S) centers, to quinones in the photosynthetic chain and possibly in a chloroplast respiratory chain. The immediate electron acceptor for the enzyme in this species is believed to be plastoquinone. Couples the redox reaction to proton translocation, and thus conserves the redox energy in a proton gradient. This chain is NAD(P)H-quinone oxidoreductase subunit 1, chloroplastic, found in Chlorokybus atmophyticus (Soil alga).